Reading from the N-terminus, the 208-residue chain is GTP cyclohydrolase 1 (208 aa).

Residues cysteine 89, histidine 92, and cysteine 163 each contribute to the Zn(2+) site.

Belongs to the GTP cyclohydrolase I family. Homomer.

It carries out the reaction GTP + H2O = 7,8-dihydroneopterin 3'-triphosphate + formate + H(+). Its pathway is cofactor biosynthesis; 7,8-dihydroneopterin triphosphate biosynthesis; 7,8-dihydroneopterin triphosphate from GTP: step 1/1. This chain is GTP cyclohydrolase 1, found in Saccharolobus islandicus (strain L.S.2.15 / Lassen #1) (Sulfolobus islandicus).